The sequence spans 630 residues: Molybdenum cofactor biosynthesis protein 1 (630 aa).

The Radical SAM core domain maps to 61–298 (RFNRHHTYLR…SKTYHVPGFK (238 aa)). Arginine 70 is a GTP binding site. Cysteine 77 and cysteine 81 together coordinate [4Fe-4S] cluster. Tyrosine 83 is an S-adenosyl-L-methionine binding site. A [4Fe-4S] cluster-binding site is contributed by cysteine 84. Arginine 120 provides a ligand contact to GTP. Glycine 124 serves as a coordination point for S-adenosyl-L-methionine. Position 151 (threonine 151) interacts with GTP. Serine 175 contacts S-adenosyl-L-methionine. Lysine 212 lines the GTP pocket. S-adenosyl-L-methionine is bound at residue methionine 246. The [4Fe-4S] cluster site is built by cysteine 312 and cysteine 315. Position 317-319 (317-319 (RLR)) interacts with GTP. Cysteine 329 provides a ligand contact to [4Fe-4S] cluster. The molybdenum cofactor biosynthesis protein C stretch occupies residues 402–629 (KEVKNYLLKL…GGKSSSPQIT (228 aa)). Catalysis depends on aspartate 599, which acts as the For molybdenum cofactor biosynthesis protein C activity.

The protein in the C-terminal section; belongs to the MoaC family. In the N-terminal section; belongs to the radical SAM superfamily. MoaA family. In terms of assembly, isoform mocs1a and isoform mocs1b probably form a heterooligomer. Requires [4Fe-4S] cluster as cofactor.

It catalyses the reaction GTP + AH2 + S-adenosyl-L-methionine = (8S)-3',8-cyclo-7,8-dihydroguanosine 5'-triphosphate + 5'-deoxyadenosine + L-methionine + A + H(+). The enzyme catalyses (8S)-3',8-cyclo-7,8-dihydroguanosine 5'-triphosphate = cyclic pyranopterin phosphate + diphosphate. It functions in the pathway cofactor biosynthesis; molybdopterin biosynthesis. Isoform mocs1a and isoform mocs1b probably form a complex that catalyzes the conversion of 5'-GTP to cyclic pyranopterin monophosphate (cPMP). mocs1a catalyzes the cyclization of GTP to (8S)-3',8-cyclo-7,8-dihydroguanosine 5'-triphosphate and mocs1b catalyzes the subsequent conversion of (8S)-3',8-cyclo-7,8-dihydroguanosine 5'-triphosphate to cPMP. This chain is Molybdenum cofactor biosynthesis protein 1 (mocs1), found in Dictyostelium discoideum (Social amoeba).